The sequence spans 486 residues: Glutamyl-tRNA(Gln) amidotransferase subunit A (486 aa).

Catalysis depends on charge relay system residues Lys-76 and Ser-151. The active-site Acyl-ester intermediate is Ser-175.

The protein belongs to the amidase family. GatA subfamily. As to quaternary structure, heterotrimer of A, B and C subunits.

It carries out the reaction L-glutamyl-tRNA(Gln) + L-glutamine + ATP + H2O = L-glutaminyl-tRNA(Gln) + L-glutamate + ADP + phosphate + H(+). Functionally, allows the formation of correctly charged Gln-tRNA(Gln) through the transamidation of misacylated Glu-tRNA(Gln) in organisms which lack glutaminyl-tRNA synthetase. The reaction takes place in the presence of glutamine and ATP through an activated gamma-phospho-Glu-tRNA(Gln). The chain is Glutamyl-tRNA(Gln) amidotransferase subunit A from Chromohalobacter salexigens (strain ATCC BAA-138 / DSM 3043 / CIP 106854 / NCIMB 13768 / 1H11).